A 155-amino-acid polypeptide reads, in one-letter code: Ribosomal RNA large subunit methyltransferase H (155 aa).

S-adenosyl-L-methionine contacts are provided by residues leucine 72, glycine 103, and 122–127; that span reads LSTMTL.

Belongs to the RNA methyltransferase RlmH family. In terms of assembly, homodimer.

The protein resides in the cytoplasm. The catalysed reaction is pseudouridine(1915) in 23S rRNA + S-adenosyl-L-methionine = N(3)-methylpseudouridine(1915) in 23S rRNA + S-adenosyl-L-homocysteine + H(+). Its function is as follows. Specifically methylates the pseudouridine at position 1915 (m3Psi1915) in 23S rRNA. This chain is Ribosomal RNA large subunit methyltransferase H, found in Nitrosomonas eutropha (strain DSM 101675 / C91 / Nm57).